A 356-amino-acid polypeptide reads, in one-letter code: Dihydroorotate dehydrogenase (quinone) (356 aa).

FMN-binding positions include 68-72 (AGFDK) and T92. K72 contributes to the substrate binding site. Position 117–121 (117–121 (NRMGF)) interacts with substrate. FMN contacts are provided by N145 and N178. N178 provides a ligand contact to substrate. S181 acts as the Nucleophile in catalysis. Residue N183 coordinates substrate. K214 and T242 together coordinate FMN. 243–244 (NT) contributes to the substrate binding site. FMN is bound by residues G266, G295, and 316–317 (YT).

It belongs to the dihydroorotate dehydrogenase family. Type 2 subfamily. Monomer. The cofactor is FMN.

It localises to the cell membrane. The enzyme catalyses (S)-dihydroorotate + a quinone = orotate + a quinol. Its pathway is pyrimidine metabolism; UMP biosynthesis via de novo pathway; orotate from (S)-dihydroorotate (quinone route): step 1/1. Functionally, catalyzes the conversion of dihydroorotate to orotate with quinone as electron acceptor. In Mycobacterium sp. (strain KMS), this protein is Dihydroorotate dehydrogenase (quinone).